The sequence spans 167 residues: Phosphopantetheine adenylyltransferase (167 aa).

Residue Thr-9 coordinates substrate. Residues 9-10 and His-17 contribute to the ATP site; that span reads TF. Substrate is bound by residues Lys-41, Leu-73, and Arg-87. ATP is bound by residues 88 to 90, Glu-98, and 123 to 129; these read GLR and NSYISST.

The protein belongs to the bacterial CoaD family. In terms of assembly, homohexamer. The cofactor is Mg(2+).

It localises to the cytoplasm. The enzyme catalyses (R)-4'-phosphopantetheine + ATP + H(+) = 3'-dephospho-CoA + diphosphate. Its pathway is cofactor biosynthesis; coenzyme A biosynthesis; CoA from (R)-pantothenate: step 4/5. Its function is as follows. Reversibly transfers an adenylyl group from ATP to 4'-phosphopantetheine, yielding dephospho-CoA (dPCoA) and pyrophosphate. The chain is Phosphopantetheine adenylyltransferase from Chromohalobacter salexigens (strain ATCC BAA-138 / DSM 3043 / CIP 106854 / NCIMB 13768 / 1H11).